The chain runs to 76 residues: uncharacterized protein (76 aa).

Residues 40–60 traverse the membrane as a helical segment; sequence IVLNLVVLVGVVPLTWMFLGQ.

Its subcellular location is the membrane. This is an uncharacterized protein from Dictyostelium discoideum (Social amoeba).